The sequence spans 205 residues: Myb-related protein 305 (205 aa).

HTH myb-type domains lie at 10-62 and 63-117; these read DVEV…LNYL and RPDV…QKHM. DNA-binding regions (H-T-H motif) lie at residues 38 to 62 and 90 to 113; these read WNSL…LNYL and WSKI…RTRI.

As to expression, expressed only in flowers.

The protein localises to the nucleus. Transcription factor. This Antirrhinum majus (Garden snapdragon) protein is Myb-related protein 305.